A 778-amino-acid polypeptide reads, in one-letter code: Hyperosmolality-gated Ca2+ permeable channel 1.4 (778 aa).

Transmembrane regions (helical) follow at residues 7-27, 101-121, 158-178, 375-395, 427-447, 467-487, 512-532, 584-604, 626-646, and 651-671; these read IGLA…LFAI, IYLI…SILV, FWAH…VLMK, FVMH…IAFV, FLPG…LMIM, YYIF…SAFE, ATFF…GEIF, PVTP…YLVF, VHGR…GLMS, and VQST…HRFC. The disordered stretch occupies residues 738 to 778; sequence VVQTKRQRSRRTTVASSNASRGSSQSTPFNQLDLGKGKPET. Residues 753 to 763 are compositionally biased toward low complexity; that stretch reads SSNASRGSSQS.

The protein belongs to the CSC1 (TC 1.A.17) family.

It localises to the membrane. Functionally, acts as an osmosensitive calcium-permeable cation channel. The chain is Hyperosmolality-gated Ca2+ permeable channel 1.4 from Arabidopsis thaliana (Mouse-ear cress).